We begin with the raw amino-acid sequence, 475 residues long: Chemotaxis protein MotD (475 aa).

Disordered stretches follow at residues 1 to 175, 195 to 243, and 408 to 475; these read MRPL…PVGG, LQPE…SEPD, and GDSA…HVYM. The segment covering 9–22 has biased composition (polar residues); the sequence is RTSAASRPAQSLSV. The segment covering 79–100 has biased composition (low complexity); it reads ADVPASMADAASPDARPASERA. The segment covering 143-155 has biased composition (basic and acidic residues); it reads HSRETVHALRDAI. Positions 408–417 are enriched in gly residues; sequence GDSASGGGGQ. A compositionally biased stretch (basic and acidic residues) spans 427 to 449; sequence EGRERAGDDGQGRQPRDGGRAAT.

Its subcellular location is the cytoplasm. In terms of biological role, required for the rotation of the flagellar motor. Has a positive effect as flagellar rotation increases when an excess of motd is present. In Rhizobium meliloti (Ensifer meliloti), this protein is Chemotaxis protein MotD (motD).